Consider the following 152-residue polypeptide: Small ribosomal subunit protein uS15 (152 aa).

The span at 1-10 shows a compositional bias: basic residues; that stretch reads MARMYARRRG. Residues 1-24 form a disordered region; the sequence is MARMYARRRGTSSSVRPYRKEAPE.

The protein belongs to the universal ribosomal protein uS15 family. In terms of assembly, part of the 30S ribosomal subunit.

This Methanoculleus marisnigri (strain ATCC 35101 / DSM 1498 / JR1) protein is Small ribosomal subunit protein uS15.